The sequence spans 237 residues: DNA repair protein RecO (237 aa).

The protein belongs to the RecO family.

Functionally, involved in DNA repair and RecF pathway recombination. The polypeptide is DNA repair protein RecO (Flavobacterium johnsoniae (strain ATCC 17061 / DSM 2064 / JCM 8514 / BCRC 14874 / CCUG 350202 / NBRC 14942 / NCIMB 11054 / UW101) (Cytophaga johnsonae)).